A 326-amino-acid polypeptide reads, in one-letter code: Tryptophan--tRNA ligase (326 aa).

ATP-binding positions include 11 to 13 (QPT) and 19 to 20 (GN). The 'HIGH' region motif lies at 12–20 (PTGQIHLGN). L-tryptophan is bound at residue Asp-135. Residues 147–149 (GED), Val-186, and 195–199 (KMSKS) each bind ATP. Positions 195-199 (KMSKS) match the 'KMSKS' region motif.

The protein belongs to the class-I aminoacyl-tRNA synthetase family. As to quaternary structure, homodimer.

The protein resides in the cytoplasm. The catalysed reaction is tRNA(Trp) + L-tryptophan + ATP = L-tryptophyl-tRNA(Trp) + AMP + diphosphate + H(+). Its function is as follows. Catalyzes the attachment of tryptophan to tRNA(Trp). The chain is Tryptophan--tRNA ligase from Helicobacter pylori (strain J99 / ATCC 700824) (Campylobacter pylori J99).